A 282-amino-acid polypeptide reads, in one-letter code: Ribosome-inactivating protein bryodin II (282 aa).

Positions 1–21 are cleaved as a signal peptide; the sequence is MRSIGFYSVLALYVGAHVTED. Asn25 is a glycosylation site (N-linked (GlcNAc...) asparagine). The active site involves Glu183.

This sequence belongs to the ribosome-inactivating protein family. Type 1 RIP subfamily.

It catalyses the reaction Endohydrolysis of the N-glycosidic bond at one specific adenosine on the 28S rRNA.. Functionally, ribosome-inactivating protein of type 1, inhibits protein synthesis in animal cells. The protein is Ribosome-inactivating protein bryodin II of Bryonia dioica (Red bryony).